The primary structure comprises 93 residues: UPF0358 protein BPUM_1375 (93 aa).

This sequence belongs to the UPF0358 family.

In Bacillus pumilus (strain SAFR-032), this protein is UPF0358 protein BPUM_1375.